A 379-amino-acid polypeptide reads, in one-letter code: Homoserine O-acetyltransferase (379 aa).

The AB hydrolase-1 domain maps to 52–356 (NVVVVLHALT…VYGHDGFLVE (305 aa)). S157 (nucleophile) is an active-site residue. R227 serves as a coordination point for substrate. Catalysis depends on residues D320 and H350. D351 is a binding site for substrate.

It belongs to the AB hydrolase superfamily. MetX family. In terms of assembly, homodimer.

The protein resides in the cytoplasm. It carries out the reaction L-homoserine + acetyl-CoA = O-acetyl-L-homoserine + CoA. It participates in amino-acid biosynthesis; L-methionine biosynthesis via de novo pathway; O-acetyl-L-homoserine from L-homoserine: step 1/1. Functionally, transfers an acetyl group from acetyl-CoA to L-homoserine, forming acetyl-L-homoserine. The chain is Homoserine O-acetyltransferase from Mycobacterium bovis (strain ATCC BAA-935 / AF2122/97).